We begin with the raw amino-acid sequence, 665 residues long: Intraflagellar transport protein 70B (665 aa).

TPR repeat units follow at residues 11–44, 45–78, 154–187, 189–221, 393–424, 425–457, and 459–492; these read DGEF…SPRS, RAGL…HPEL, TDGQ…SGYQ, DLSY…GIRQ, LTIQ…EKYI, PVLM…CNDH, and VWKL…HYDN. The disordered stretch occupies residues 130 to 154; that stretch reads PGSRSLVEQLPSREGGEESGGENET. Residues 508-535 are a coiled coil; the sequence is YIMTSQNEEAEELMRKIEKEEEQLSYDD. One copy of the TPR 8 repeat lies at 544 to 577; it reads CIVNLVIGTLYCAKGNYDFGISRVIKSLEPYNKK.

Belongs to the TTC30/dfy-1/fleer family. Interacts with the IFT B complex components IFT27, IFT46, IFT74, IFT52, IFT57, IFT80, IFT81 and IFT88. Interacts with KIF17.

It localises to the cell projection. The protein resides in the cilium. Its function is as follows. Required for polyglutamylation of axonemal tubulin. Plays a role in anterograde intraflagellar transport (IFT), the process by which cilia precursors are transported from the base of the cilium to the site of their incorporation at the tip. In Homo sapiens (Human), this protein is Intraflagellar transport protein 70B.